We begin with the raw amino-acid sequence, 279 residues long: Plasmodesmata-located protein 8 (279 aa).

The N-terminal stretch at 1 to 20 (MRRLFLFSLLFLFFYSSSSS) is a signal peptide. Residues 21-253 (RSSSESHIFI…PTNGDHVGKS (233 aa)) lie on the Extracellular side of the membrane. 2 consecutive Gnk2-homologous domains span residues 27–135 (HIFI…TNDF) and 137–237 (GKPD…GSGY). 6 disulfides stabilise this stretch: cysteine 34-cysteine 113, cysteine 89-cysteine 98, cysteine 101-cysteine 126, cysteine 148-cysteine 215, cysteine 191-cysteine 200, and cysteine 203-cysteine 228. A helical membrane pass occupies residues 254–274 (IAIIVGVIAGFAILVVLLSLC). The necessary and sufficient for plasmodesmal targeting stretch occupies residues 254–274 (IAIIVGVIAGFAILVVLLSLC). Topologically, residues 275–279 (RNSMH) are cytoplasmic.

The protein belongs to the cysteine-rich repeat secretory protein family. Plasmodesmata-located proteins (PDLD) subfamily. Interacts with ACBP6; interaction occurs at the plasma membrane. As to quaternary structure, (Microbial infection) Interacts with Grapevine fanleaf virus (GFLV) 2B-MP. As to expression, highly expressed in pollen, lateral root and elongation zone. Higher expression in the reproductive tissues (flowers and buds) than in vegetative organs (leaves and stems). High expression in shoot and root phloem companion cells (at protein level).

It is found in the cell membrane. It localises to the cell junction. The protein localises to the plasmodesma. Modulates cell-to-cell trafficking. This Arabidopsis thaliana (Mouse-ear cress) protein is Plasmodesmata-located protein 8.